A 274-amino-acid chain; its full sequence is Large ribosomal subunit protein uL2 (274 aa).

Residues 221-254 form a disordered region; it reads RGTAMNPADHPHGGGEGRTFGKHPVSPWGLPTKG.

This sequence belongs to the universal ribosomal protein uL2 family. As to quaternary structure, part of the 50S ribosomal subunit. Forms a bridge to the 30S subunit in the 70S ribosome.

In terms of biological role, one of the primary rRNA binding proteins. Required for association of the 30S and 50S subunits to form the 70S ribosome, for tRNA binding and peptide bond formation. It has been suggested to have peptidyltransferase activity; this is somewhat controversial. Makes several contacts with the 16S rRNA in the 70S ribosome. The chain is Large ribosomal subunit protein uL2 from Sulfurihydrogenibium sp. (strain YO3AOP1).